Here is a 349-residue protein sequence, read N- to C-terminus: Divinyl chlorophyll a/b light-harvesting protein PcbB (349 aa).

6 helical membrane-spanning segments follow: residues 27 to 47 (FIAA…AATL), 57 to 77 (LPMG…GIGF), 91 to 113 (IAIL…SVYF), 201 to 221 (VMGG…FHIA), 241 to 261 (AILS…AFWA), and 306 to 326 (LVNV…WHAL).

Belongs to the PsbB/PsbC family. IsiA/Pcb subfamily. The antenna complex consists of divinyl chlorophylls (a and b) and divinyl chlorophyll a/b binding proteins and binds more divinyl chlorophyll b than does the antenna complex from high-light-adapted Prochlorococcus. Divinyl chlorophyll a is required as a cofactor. The cofactor is divinyl chlorophyll b.

Its subcellular location is the cellular thylakoid membrane. The antenna complex functions as a light receptor, it captures and delivers excitation energy to photosystems II and I. The Prochlorales pcb genes are not related to higher plant LHCs. This is Divinyl chlorophyll a/b light-harvesting protein PcbB (pcbB) from Prochlorococcus marinus (strain SARG / CCMP1375 / SS120).